Here is a 354-residue protein sequence, read N- to C-terminus: UDP-N-acetylglucosamine--N-acetylmuramyl-(pentapeptide) pyrophosphoryl-undecaprenol N-acetylglucosamine transferase (354 aa).

Residues 11–13 (TAG), R164, S194, and Q289 each bind UDP-N-acetyl-alpha-D-glucosamine.

Belongs to the glycosyltransferase 28 family. MurG subfamily.

It is found in the cell membrane. It catalyses the reaction di-trans,octa-cis-undecaprenyl diphospho-N-acetyl-alpha-D-muramoyl-L-alanyl-D-glutamyl-meso-2,6-diaminopimeloyl-D-alanyl-D-alanine + UDP-N-acetyl-alpha-D-glucosamine = di-trans,octa-cis-undecaprenyl diphospho-[N-acetyl-alpha-D-glucosaminyl-(1-&gt;4)]-N-acetyl-alpha-D-muramoyl-L-alanyl-D-glutamyl-meso-2,6-diaminopimeloyl-D-alanyl-D-alanine + UDP + H(+). It participates in cell wall biogenesis; peptidoglycan biosynthesis. Cell wall formation. Catalyzes the transfer of a GlcNAc subunit on undecaprenyl-pyrophosphoryl-MurNAc-pentapeptide (lipid intermediate I) to form undecaprenyl-pyrophosphoryl-MurNAc-(pentapeptide)GlcNAc (lipid intermediate II). The chain is UDP-N-acetylglucosamine--N-acetylmuramyl-(pentapeptide) pyrophosphoryl-undecaprenol N-acetylglucosamine transferase from Clostridium botulinum (strain Loch Maree / Type A3).